The following is a 436-amino-acid chain: Phosphoribosylamine--glycine ligase (436 aa).

In terms of domain architecture, ATP-grasp spans 106 to 318 (RKLFEDYRIP…MLEICEGIVD (213 aa)). Position 133 to 196 (133 to 196 (MEDFDSEAVV…EERVVGEEFT (64 aa))) interacts with ATP. Residues glutamine 276, glutamate 288, and asparagine 290 each coordinate Mg(2+). Glutamine 276, glutamate 288, and asparagine 290 together coordinate Mn(2+).

This sequence belongs to the GARS family. Mg(2+) is required as a cofactor. The cofactor is Mn(2+).

It carries out the reaction 5-phospho-beta-D-ribosylamine + glycine + ATP = N(1)-(5-phospho-beta-D-ribosyl)glycinamide + ADP + phosphate + H(+). It participates in purine metabolism; IMP biosynthesis via de novo pathway; N(1)-(5-phospho-D-ribosyl)glycinamide from 5-phospho-alpha-D-ribose 1-diphosphate: step 2/2. The chain is Phosphoribosylamine--glycine ligase from Methanothermobacter thermautotrophicus (strain ATCC 29096 / DSM 1053 / JCM 10044 / NBRC 100330 / Delta H) (Methanobacterium thermoautotrophicum).